Consider the following 222-residue polypeptide: Holliday junction branch migration complex subunit RuvA (222 aa).

Residues 1-67 (MISWLNGLKI…EDGSQLIGFL (67 aa)) are domain I. Residues 68–146 (NKLERDLFRK…DLIGSSLKKT (79 aa)) are domain II. The tract at residues 147–155 (NNHLELEYE) is flexible linker. Positions 155–222 (ETNVADEVRS…TLIRINTESG (68 aa)) are domain III.

This sequence belongs to the RuvA family. Homotetramer. Forms an RuvA(8)-RuvB(12)-Holliday junction (HJ) complex. HJ DNA is sandwiched between 2 RuvA tetramers; dsDNA enters through RuvA and exits via RuvB. An RuvB hexamer assembles on each DNA strand where it exits the tetramer. Each RuvB hexamer is contacted by two RuvA subunits (via domain III) on 2 adjacent RuvB subunits; this complex drives branch migration. In the full resolvosome a probable DNA-RuvA(4)-RuvB(12)-RuvC(2) complex forms which resolves the HJ.

Its subcellular location is the cytoplasm. Its function is as follows. The RuvA-RuvB-RuvC complex processes Holliday junction (HJ) DNA during genetic recombination and DNA repair, while the RuvA-RuvB complex plays an important role in the rescue of blocked DNA replication forks via replication fork reversal (RFR). RuvA specifically binds to HJ cruciform DNA, conferring on it an open structure. The RuvB hexamer acts as an ATP-dependent pump, pulling dsDNA into and through the RuvAB complex. HJ branch migration allows RuvC to scan DNA until it finds its consensus sequence, where it cleaves and resolves the cruciform DNA. The sequence is that of Holliday junction branch migration complex subunit RuvA from Prochlorococcus marinus (strain SARG / CCMP1375 / SS120).